Reading from the N-terminus, the 576-residue chain is Coilin (576 aa).

Ser105 is subject to Phosphoserine. Residue Thr122 is modified to Phosphothreonine. Disordered regions lie at residues 125-330 (DCKY…CLMS) and 352-389 (RPGPGLSSQTAGAAGWRRSGSNGGGQAPGASPSVSLPA). Glycyl lysine isopeptide (Lys-Gly) (interchain with G-Cter in SUMO2) cross-links involve residues Lys127, Lys151, and Lys160. Ser184 is modified (phosphoserine; by VRK1 and VRK2). Residues Lys204 and Lys209 each participate in a glycyl lysine isopeptide (Lys-Gly) (interchain with G-Cter in SUMO2) cross-link. A compositionally biased stretch (polar residues) spans 214 to 225 (QRCSSPKGSARN). The stretch at 223 to 226 (ARNS) is one 1-1 repeat. Residues 223–271 (ARNSLVKAKRKGSVSVCSKESPSSSSESESCDESISDGPSKVTLEARNS) are 2 X 4 AA repeats of A-R-N-S. The segment covering 235–250 (SVSVCSKESPSSSSES) has biased composition (low complexity). Phosphoserine is present on residues Ser248, Ser250, Ser256, Ser271, and Ser272. The stretch at 268–271 (ARNS) is one 1-2 repeat. Over residues 270 to 285 (NSSEKLPTELSKEEPS) the composition is skewed to basic and acidic residues. Residues Lys274 and Lys281 each participate in a glycyl lysine isopeptide (Lys-Gly) (interchain with G-Cter in SUMO2) cross-link. Thr290 bears the Phosphothreonine mark. Glycyl lysine isopeptide (Lys-Gly) (interchain with G-Cter in SUMO2) cross-links involve residues Lys293 and Lys297. At Ser301 the chain carries Phosphoserine. Residues 301 to 320 (SLTPSKGKTSGTTSSSSDSS) are compositionally biased toward low complexity. Residue Thr303 is modified to Phosphothreonine. The stretch at 386 to 389 (SLPA) is one 2-1 repeat. A 2 X 4 AA repeats of S-L-P-A region spans residues 386-520 (SLPASLGRGW…DIEILSSLPA (135 aa)). The segment at 392–420 (GRGWGREENLFSWKGAKGRGMRGRGRGRG) is required for interaction with SMN. The residue at position 403 (Ser403) is a Phosphoserine. 4 consecutive repeat copies span residues 413–414 (RG), 415–416 (RG), 417–418 (RG), and 419–420 (RG). The segment at 413 to 420 (RGRGRGRG) is 4 X 2 AA tandem repeats of R-G. Residue Lys444 forms a Glycyl lysine isopeptide (Lys-Gly) (interchain with G-Cter in SUMO2) linkage. Residue Thr456 is modified to Phosphothreonine. A Tudor; atypical domain is found at 460 to 559 (DYSLLPLLAA…ITVFWKELID (100 aa)). Phosphoserine is present on residues Ser487 and Ser489. Residue Lys496 forms a Glycyl lysine isopeptide (Lys-Gly) (interchain with G-Cter in SUMO2) linkage. The stretch at 517–520 (SLPA) is one 2-2 repeat. At Ser566 the chain carries Phosphoserine.

This sequence belongs to the coilin family. Interacts with ANKS1B. Interacts with SMN1 (via Tudor domain). Interacts (via C-terminus) with AK6. Interacts with WRAP53/TCAB1. Interacts with HMBOX1. Interacts with PSME3; the interaction is inhibited by PSME3IP1. Interacts wit UBL5. Post-translationally, symmetrical dimethylation of arginine residues within the RG repeat region enhances affinity for SMN, and thus localization of SMN complexes to CBs. In terms of processing, phosphorylated by VRK1. Phosphorylation during mitosis is associated with disassembly of CBs. Found in all the cell types examined.

The protein resides in the nucleus. It localises to the cajal body. Its function is as follows. Component of nuclear coiled bodies, also known as Cajal bodies or CBs, which are involved in the modification and assembly of nucleoplasmic snRNPs. The sequence is that of Coilin (COIL) from Homo sapiens (Human).